A 197-amino-acid chain; its full sequence is Transcription factor FapR (197 aa).

This sequence belongs to the FapR family.

Its function is as follows. Transcriptional factor involved in regulation of membrane lipid biosynthesis by repressing genes involved in fatty acid and phospholipid metabolism. The chain is Transcription factor FapR from Bacillus cereus (strain 03BB102).